A 226-amino-acid chain; its full sequence is Charged multivesicular body protein 4 (226 aa).

A coiled-coil region spans residues 22 to 88 (IQKLRETENM…DGTLSTIEMQ (67 aa)). A disordered region spans residues 169 to 226 (QENFDKEIIGIPEPTPTLPEAPTEDLPEKAKEKKKATTTTAVEDDDDPDMKQLLSWSN).

It belongs to the SNF7 family. In terms of assembly, homopolymer; forms elongated striated filaments of uniform ~10nm width. Monomers interact in a staggered arrangement mediated by complementary charged electrostatic surfaces. Interacts with l(2)gd1 (via DM14 domains 1 and 3); the interaction is direct and blocks access to the surface involved in homopolymerization. This interaction may be required for the ESCRT-III complex role in multivesicular body formation. Expressed at considerably higher levels in testis than in ovary. Expressed in midgut, eye, mouthparts and male accessory gland.

The protein resides in the endosome. The protein localises to the multivesicular body. It is found in the midbody. With respect to regulation, may be regulated by aurB/Aurora kinase B-dependent phosphorylation. Its function is as follows. Probable core polymerisation component of the endosomal sorting required for transport (ESCRT) III complex involved in multiple cellular processes requiring the outward bending of membranes, including vesicle budding, membrane repair and cytokinesis. The ESCRT pathway involves 4 complexes (ESCRT-0, -I, -II and -III) that sequentially assemble on the cytoplasmic side of membranes and induce membrane remodeling, budding and scission. As part of the ESCRT-III complex, involved in the budding of intraluminal vesicles (ILVs) into endosomes to form multivesicular bodies (MVBs), which target their contents for degradation via the endolysosomal pathway. Involved in regulation of signal transduction pathways, including the Notch and BMP/decapentaplegic (dpp) pathways, by sequestering the intracellular domains of activated receptors into ILVs, isolating them from the cytoplasm and targeting them for lysosomal degradation. Involved in targeting ubiquitilated proteins, such as mono-ubiquitilanated N/Notch, to MVBs for degradation. Plays a role in wing development by regulating Notch signaling. Involved in abscission of germline cells during oogenesis. Involved in spermiogenesis. Required for efficient cytoplasmic isolation and abscission during cytokinesis of epithelial sensory organ precursor cells. May be involved in septate junction remodeling and maintenance. The polypeptide is Charged multivesicular body protein 4 (Drosophila melanogaster (Fruit fly)).